The primary structure comprises 236 residues: Small ribosomal subunit protein uS3 (236 aa).

Positions 39–107 (IRSYVLEELR…ETSLNIVEIR (69 aa)) constitute a KH type-2 domain. The interval 214 to 236 (ASERRATEADQSGSSSNRRRENA) is disordered.

It belongs to the universal ribosomal protein uS3 family. As to quaternary structure, part of the 30S ribosomal subunit. Forms a tight complex with proteins S10 and S14.

Binds the lower part of the 30S subunit head. Binds mRNA in the 70S ribosome, positioning it for translation. The chain is Small ribosomal subunit protein uS3 from Bartonella tribocorum (strain CIP 105476 / IBS 506).